The chain runs to 433 residues: tRNA-2-methylthio-N(6)-dimethylallyladenosine synthase (433 aa).

The MTTase N-terminal domain occupies 3 to 118 (KKLFIQTLGC…ITKAVNTPKF (116 aa)). [4Fe-4S] cluster contacts are provided by C12, C49, C81, C150, C154, and C157. Residues 136-369 (RGSPYKSHIN…QNRHSEILDE (234 aa)) form the Radical SAM core domain. The TRAM domain occupies 372–433 (AAQKDKIFDV…RMVLYGELQI (62 aa)).

Belongs to the methylthiotransferase family. MiaB subfamily. Monomer. [4Fe-4S] cluster is required as a cofactor.

It localises to the cytoplasm. The catalysed reaction is N(6)-dimethylallyladenosine(37) in tRNA + (sulfur carrier)-SH + AH2 + 2 S-adenosyl-L-methionine = 2-methylsulfanyl-N(6)-dimethylallyladenosine(37) in tRNA + (sulfur carrier)-H + 5'-deoxyadenosine + L-methionine + A + S-adenosyl-L-homocysteine + 2 H(+). Its function is as follows. Catalyzes the methylthiolation of N6-(dimethylallyl)adenosine (i(6)A), leading to the formation of 2-methylthio-N6-(dimethylallyl)adenosine (ms(2)i(6)A) at position 37 in tRNAs that read codons beginning with uridine. This Campylobacter concisus (strain 13826) protein is tRNA-2-methylthio-N(6)-dimethylallyladenosine synthase.